The following is a 451-amino-acid chain: Cyclin-dependent kinase 18 (451 aa).

Residues Ser-12, Ser-51, Ser-66, Ser-75, and Ser-109 each carry the phosphoserine modification. A Protein kinase domain is found at 121–402 (YVKLDKLGEG…AEAALNHPYF (282 aa)). ATP is bound by residues 127–135 (LGEGTYATV) and Lys-150. The active-site Proton acceptor is the Asp-242. Ser-417 and Ser-420 each carry phosphoserine.

Belongs to the protein kinase superfamily. CMGC Ser/Thr protein kinase family. CDC2/CDKX subfamily. In brain, kidney, intestine and at a much lower level, in fetal tissues.

The enzyme catalyses L-seryl-[protein] + ATP = O-phospho-L-seryl-[protein] + ADP + H(+). It carries out the reaction L-threonyl-[protein] + ATP = O-phospho-L-threonyl-[protein] + ADP + H(+). May play a role in signal transduction cascades in terminally differentiated cells. The sequence is that of Cyclin-dependent kinase 18 (Cdk18) from Mus musculus (Mouse).